A 240-amino-acid chain; its full sequence is Uridylate kinase (240 aa).

Residue 12–15 (KLSG) coordinates ATP. An involved in allosteric activation by GTP region spans residues 20–25 (GDKGFG). A UMP-binding site is contributed by Gly54. Residues Gly55 and Arg59 each contribute to the ATP site. UMP contacts are provided by residues Asp74 and 135 to 142 (TGSPYFST). Residues Asn163, Tyr169, and Asp172 each coordinate ATP.

Belongs to the UMP kinase family. As to quaternary structure, homohexamer.

The protein localises to the cytoplasm. It catalyses the reaction UMP + ATP = UDP + ADP. It participates in pyrimidine metabolism; CTP biosynthesis via de novo pathway; UDP from UMP (UMPK route): step 1/1. With respect to regulation, allosterically activated by GTP. Inhibited by UTP. In terms of biological role, catalyzes the reversible phosphorylation of UMP to UDP. In Levilactobacillus brevis (strain ATCC 367 / BCRC 12310 / CIP 105137 / JCM 1170 / LMG 11437 / NCIMB 947 / NCTC 947) (Lactobacillus brevis), this protein is Uridylate kinase.